The primary structure comprises 230 residues: MIKTKVLQAWMGIWLCAVNGLLGSDQDCSDRDPTGSRCSISVEKLLDRAIQHAELIYRISDEARTLFEEMFIPLLIPAHQVHGGNSCTSNLVRVPISKLEIQQISDKWLLHSISILVQVWIEPLADLQDSLDMYDNVPSSLISKTRWMSTKLMNLKQGVLVLMSKMLDEGSVELENNESMLRHIVAPAMAEHVLRDYAVLSCFKKDAHKMETFLKLLRCRQTDNPTCSLF.

The first 23 residues, 1–23 (MIKTKVLQAWMGIWLCAVNGLLG), serve as a signal peptide directing secretion. 3 disulfide bridges follow: Cys-28/Cys-38, Cys-87/Cys-202, and Cys-219/Cys-227. Asn-177 carries an N-linked (GlcNAc...) asparagine glycan.

Belongs to the somatotropin/prolactin family.

The protein resides in the secreted. The polypeptide is Somatolactin (Ictalurus punctatus (Channel catfish)).